The chain runs to 388 residues: Succinate--CoA ligase [ADP-forming] subunit beta (388 aa).

An ATP-grasp domain is found at 9–245 (KALLKKYGVS…KSQENERELK (237 aa)). Residues Lys-46, 53 to 55 (GRG), Glu-100, Tyr-103, and Glu-108 each bind ATP. Asn-200 and Asp-214 together coordinate Mg(2+). Substrate contacts are provided by residues Asn-265 and 322-324 (GIV).

It belongs to the succinate/malate CoA ligase beta subunit family. In terms of assembly, heterotetramer of two alpha and two beta subunits. Mg(2+) is required as a cofactor.

The catalysed reaction is succinate + ATP + CoA = succinyl-CoA + ADP + phosphate. It carries out the reaction GTP + succinate + CoA = succinyl-CoA + GDP + phosphate. Its pathway is carbohydrate metabolism; tricarboxylic acid cycle; succinate from succinyl-CoA (ligase route): step 1/1. In terms of biological role, succinyl-CoA synthetase functions in the citric acid cycle (TCA), coupling the hydrolysis of succinyl-CoA to the synthesis of either ATP or GTP and thus represents the only step of substrate-level phosphorylation in the TCA. The beta subunit provides nucleotide specificity of the enzyme and binds the substrate succinate, while the binding sites for coenzyme A and phosphate are found in the alpha subunit. In Acinetobacter baylyi (strain ATCC 33305 / BD413 / ADP1), this protein is Succinate--CoA ligase [ADP-forming] subunit beta.